The following is an 82-amino-acid chain: Small ribosomal subunit protein uS17 (82 aa).

The protein belongs to the universal ribosomal protein uS17 family. As to quaternary structure, part of the 30S ribosomal subunit.

Its function is as follows. One of the primary rRNA binding proteins, it binds specifically to the 5'-end of 16S ribosomal RNA. The polypeptide is Small ribosomal subunit protein uS17 (Shewanella woodyi (strain ATCC 51908 / MS32)).